A 208-amino-acid polypeptide reads, in one-letter code: MVDNKDFNEELKESIQEELDNETKSENPNIDEEVEEVSEDIKADEKVIDFEELKALKEENTMFKSKTKKLENELEALKDRLLRISSEYENYRKRTDKEKERIYTDACEDVLIKMLPVLDNLERALAVDGTVEDLKKGVEMTVRQFEDALEKLQVEEISTENGFDPELHQAMMVVEQEGSEPNQVAQVFQKGYKRGDKVIRHSMVTVTK.

A compositionally biased stretch (basic and acidic residues) spans M1–S25. A disordered region spans residues M1–S38. Acidic residues predominate over residues N29 to S38.

This sequence belongs to the GrpE family. In terms of assembly, homodimer.

It localises to the cytoplasm. Functionally, participates actively in the response to hyperosmotic and heat shock by preventing the aggregation of stress-denatured proteins, in association with DnaK and GrpE. It is the nucleotide exchange factor for DnaK and may function as a thermosensor. Unfolded proteins bind initially to DnaJ; upon interaction with the DnaJ-bound protein, DnaK hydrolyzes its bound ATP, resulting in the formation of a stable complex. GrpE releases ADP from DnaK; ATP binding to DnaK triggers the release of the substrate protein, thus completing the reaction cycle. Several rounds of ATP-dependent interactions between DnaJ, DnaK and GrpE are required for fully efficient folding. The protein is Protein GrpE of Clostridium perfringens (strain SM101 / Type A).